A 174-amino-acid chain; its full sequence is uncharacterized protein (174 aa).

This is an uncharacterized protein from Bacillus subtilis (strain 168).